Consider the following 190-residue polypeptide: Shikimate kinase (190 aa).

13–18 (GAGKTT) contacts ATP. T17 is a binding site for Mg(2+). Residues D35, R59, and G81 each contribute to the substrate site. R119 lines the ATP pocket. R138 provides a ligand contact to substrate.

This sequence belongs to the shikimate kinase family. As to quaternary structure, monomer. The cofactor is Mg(2+).

It localises to the cytoplasm. It carries out the reaction shikimate + ATP = 3-phosphoshikimate + ADP + H(+). It functions in the pathway metabolic intermediate biosynthesis; chorismate biosynthesis; chorismate from D-erythrose 4-phosphate and phosphoenolpyruvate: step 5/7. Catalyzes the specific phosphorylation of the 3-hydroxyl group of shikimic acid using ATP as a cosubstrate. The protein is Shikimate kinase of Ralstonia nicotianae (strain ATCC BAA-1114 / GMI1000) (Ralstonia solanacearum).